Consider the following 764-residue polypeptide: 5-methyltetrahydropteroyltriglutamate--homocysteine methyltransferase (764 aa).

Residues 16 to 19 (RELK) and Lys-117 each bind 5-methyltetrahydropteroyltri-L-glutamate. L-homocysteine is bound by residues 442–444 (IGS) and Glu-495. Residues 442–444 (IGS) and Glu-495 each bind L-methionine. Residues 526–527 (RC) and Trp-572 contribute to the 5-methyltetrahydropteroyltri-L-glutamate site. Asp-610 provides a ligand contact to L-homocysteine. Asp-610 is an L-methionine binding site. Position 616 (Glu-616) interacts with 5-methyltetrahydropteroyltri-L-glutamate. Residues His-652, Cys-654, and Glu-676 each coordinate Zn(2+). Residue His-705 is the Proton donor of the active site. Cys-737 contacts Zn(2+).

The protein belongs to the vitamin-B12 independent methionine synthase family. Zn(2+) is required as a cofactor.

It carries out the reaction 5-methyltetrahydropteroyltri-L-glutamate + L-homocysteine = tetrahydropteroyltri-L-glutamate + L-methionine. The protein operates within amino-acid biosynthesis; L-methionine biosynthesis via de novo pathway; L-methionine from L-homocysteine (MetE route): step 1/1. Catalyzes the transfer of a methyl group from 5-methyltetrahydrofolate to homocysteine resulting in methionine formation. The chain is 5-methyltetrahydropteroyltriglutamate--homocysteine methyltransferase from Bordetella bronchiseptica (strain ATCC BAA-588 / NCTC 13252 / RB50) (Alcaligenes bronchisepticus).